Consider the following 145-residue polypeptide: Ribonuclease HI (145 aa).

Residues 1–142 (MNQTVYLYTD…ADDLANRGAA (142 aa)) enclose the RNase H type-1 domain. Mg(2+)-binding residues include Asp-10, Glu-48, Asp-70, and Asp-134.

The protein belongs to the RNase H family. Monomer. It depends on Mg(2+) as a cofactor.

The protein resides in the cytoplasm. It carries out the reaction Endonucleolytic cleavage to 5'-phosphomonoester.. Functionally, endonuclease that specifically degrades the RNA of RNA-DNA hybrids. This chain is Ribonuclease HI, found in Neisseria meningitidis serogroup B (strain ATCC BAA-335 / MC58).